Consider the following 307-residue polypeptide: Ribonuclease HII (307 aa).

The RNase H type-2 domain occupies glutamate 44 to leucine 235. 3 residues coordinate a divalent metal cation: aspartate 50, glutamate 51, and aspartate 144. Residues alanine 241 to proline 307 are disordered. Positions alanine 250–glycine 280 are enriched in low complexity. Basic and acidic residues predominate over residues arginine 287–aspartate 296.

This sequence belongs to the RNase HII family. It depends on Mn(2+) as a cofactor. Requires Mg(2+) as cofactor.

It is found in the cytoplasm. It carries out the reaction Endonucleolytic cleavage to 5'-phosphomonoester.. Functionally, endonuclease that specifically degrades the RNA of RNA-DNA hybrids. This is Ribonuclease HII from Acidothermus cellulolyticus (strain ATCC 43068 / DSM 8971 / 11B).